Here is a 449-residue protein sequence, read N- to C-terminus: Glucose-6-phosphate isomerase (449 aa).

E291 serves as the catalytic Proton donor. Residues H312 and K426 contribute to the active site.

The protein belongs to the GPI family.

The protein localises to the cytoplasm. The catalysed reaction is alpha-D-glucose 6-phosphate = beta-D-fructose 6-phosphate. Its pathway is carbohydrate biosynthesis; gluconeogenesis. It participates in carbohydrate degradation; glycolysis; D-glyceraldehyde 3-phosphate and glycerone phosphate from D-glucose: step 2/4. Catalyzes the reversible isomerization of glucose-6-phosphate to fructose-6-phosphate. The protein is Glucose-6-phosphate isomerase of Streptococcus pyogenes serotype M6 (strain ATCC BAA-946 / MGAS10394).